The chain runs to 95 residues: PIK3R3 upstream open reading frame protein (95 aa).

The interval 1–27 is disordered; it reads MGPSRLVRGPRPQGMRSPYRRPGMGWP.

This is PIK3R3 upstream open reading frame protein from Homo sapiens (Human).